Consider the following 507-residue polypeptide: Natural resistance-associated macrophage protein 1 (507 aa).

The tract at residues methionine 1–leucine 36 is disordered. Residues methionine 1–lysine 39 lie on the Cytoplasmic side of the membrane. Polar residues predominate over residues glutamine 8–proline 22. The chain crosses the membrane as a helical span at residues isoleucine 40–leucine 60. The Extracellular segment spans residues leucine 61–arginine 123. Residues isoleucine 124–aspartate 144 traverse the membrane as a helical segment. The Cytoplasmic portion of the chain corresponds to asparagine 145–glutamate 152. Residues alanine 153–alanine 173 traverse the membrane as a helical segment. The Extracellular segment spans residues arginine 174–glutamine 199. The helical transmembrane segment at alanine 200–valine 220 threads the bilayer. Topologically, residues lysine 221 to threonine 245 are cytoplasmic. A helical membrane pass occupies residues isoleucine 246 to phenylalanine 266. Residues tyrosine 267 to glycine 305 are Extracellular-facing. 2 N-linked (GlcNAc...) asparagine glycosylation sites follow: asparagine 280 and asparagine 294. Residues valine 306–alanine 326 form a helical membrane-spanning segment. The Cytoplasmic portion of the chain corresponds to alanine 327–arginine 353. Residues phenylalanine 354 to phenylalanine 374 traverse the membrane as a helical segment. Residues arginine 375 to glutamine 391 lie on the Extracellular side of the membrane. The helical transmembrane segment at serine 392–methionine 412 threads the bilayer. The Cytoplasmic portion of the chain corresponds to glutamine 413–lysine 422. A helical membrane pass occupies residues valine 423–tyrosine 443. The Extracellular segment spans residues leucine 444 to alanine 451. The chain crosses the membrane as a helical span at residues tyrosine 452–tryptophan 472. The Cytoplasmic portion of the chain corresponds to threonine 473–glycine 507.

It belongs to the NRAMP family.

It localises to the late endosome membrane. The protein resides in the lysosome membrane. It carries out the reaction Zn(2+)(in) + H(+)(out) = Zn(2+)(out) + H(+)(in). The catalysed reaction is Fe(2+)(in) + H(+)(out) = Fe(2+)(out) + H(+)(in). It catalyses the reaction Mn(2+)(in) + H(+)(out) = Mn(2+)(out) + H(+)(in). Macrophage-specific antiporter that fluxes metal ions in either direction against a proton gradient. Localized to late endosomal lysosomal membranes, delivers bivalent cations from the cytosol into these acidic compartments where they may directly affect antimicrobial activity. Involved in iron metabolism and host natural resistance to infection with intracellular parasites. Pathogen resistance involves sequestration of Fe(2+) and Mn(2+), cofactors of both prokaryotic and eukaryotic catalases and superoxide dismutases, not only to protect the macrophage against its own generation of reactive oxygen species, but to deny the cations to the pathogen for synthesis of its protective enzymes. This Rattus norvegicus (Rat) protein is Natural resistance-associated macrophage protein 1 (Slc11a1).